A 428-amino-acid chain; its full sequence is MRVVILGSGVVGVASAYYLARAGHEVTVIDREAGPALDTSFANAGQISPGYAAPWAAPGVPLKAVKWMFEKHAPLAIRLDGTRFQLQWMWQMLRNCTTERYALNKGRMVRLAEYSRDCLQALRAETDIQYEGRTGGTLQVFRTQQQLDGAAKDIAVLREANVPFELLSSDELKKAEPALAAVSHKLTGGLRLPGDETGDCQLFTTRLAALAEQLGVKFRFNTRIDALAVAGGKIAGVQCGGEMVRADAYVVALGAFSTNLVANLVKIPVYPLKGYSITAPIVDAAKAPVSTVLDETYKIAITRFDERIRVGGMAEIVGFDKRLRQARRDTLEMCVNDLFPGGGDTANASFWTGLRPMTPDGTPIVGRTPVPNLFLNTGHGTLGWTMSCGSGQLLADLMSGKKPAIRADDLSVHRYLSETDGEHRPAYA.

An FAD-binding site is contributed by 3-17 (VVILGSGVVGVASAY).

This sequence belongs to the DadA oxidoreductase family. Requires FAD as cofactor.

The enzyme catalyses a D-alpha-amino acid + A + H2O = a 2-oxocarboxylate + AH2 + NH4(+). It functions in the pathway amino-acid degradation; D-alanine degradation; NH(3) and pyruvate from D-alanine: step 1/1. Oxidative deamination of D-amino acids. This chain is D-amino acid dehydrogenase, found in Burkholderia thailandensis (strain ATCC 700388 / DSM 13276 / CCUG 48851 / CIP 106301 / E264).